A 370-amino-acid polypeptide reads, in one-letter code: 3-isopropylmalate dehydrogenase (370 aa).

77-90 (GAKWDGVPYEARPE) contributes to the NAD(+) binding site. Positions 97, 107, 135, and 226 each coordinate substrate. Residues Asp226, Asp250, and Asp254 each contribute to the Mg(2+) site. 290–302 (GSAPDIAGKGLAN) contributes to the NAD(+) binding site.

Belongs to the isocitrate and isopropylmalate dehydrogenases family. LeuB type 1 subfamily. Homodimer. The cofactor is Mg(2+). Requires Mn(2+) as cofactor.

It localises to the cytoplasm. It catalyses the reaction (2R,3S)-3-isopropylmalate + NAD(+) = 4-methyl-2-oxopentanoate + CO2 + NADH. Its pathway is amino-acid biosynthesis; L-leucine biosynthesis; L-leucine from 3-methyl-2-oxobutanoate: step 3/4. In terms of biological role, catalyzes the oxidation of 3-carboxy-2-hydroxy-4-methylpentanoate (3-isopropylmalate) to 3-carboxy-4-methyl-2-oxopentanoate. The product decarboxylates to 4-methyl-2 oxopentanoate. The sequence is that of 3-isopropylmalate dehydrogenase from Rhodopseudomonas palustris (strain BisB18).